The following is a 210-amino-acid chain: High mobility group protein B2 (210 aa).

The residue at position 3 (K3) is an N6-acetyllysine. Positions 9–79 form a DNA-binding region, HMG box 1; that stretch reads PRGKMSSYAF…RYDREMKNYV (71 aa). C23 carries the post-translational modification Cysteine sulfonic acid (-SO3H); alternate. A disulfide bond links C23 and C45. K30 bears the N6-acetyllysine mark. Residue S35 is modified to Phosphoserine. K43 bears the N6-acetyllysine mark. At C45 the chain carries Cysteine sulfonic acid (-SO3H); alternate. The disordered stretch occupies residues 71-102; that stretch reads YDREMKNYVPPKGDKKGKKKDPNAPKRPPSAF. Position 90 is an N6-acetyllysine (K90). The HMG box 2 DNA-binding region spans 95 to 163; it reads PKRPPSAFFL…KYEKDIAAYR (69 aa). The residue at position 100 (S100) is a Phosphoserine. Position 106 is a cysteine sulfonic acid (-SO3H) (C106). K114 and K141 each carry N6-acetyllysine. Residues 162–172 are compositionally biased toward basic and acidic residues; that stretch reads YRAKGKSEAGK. The tract at residues 162–210 is disordered; it reads YRAKGKSEAGKKGPGRPTGSKKKNEPEDEEEEEEEEEEEDDEEEEEDEE. The segment at 165-180 is required for chemotactic activity; the sequence is KGKSEAGKKGPGRPTG. The span at 187 to 210 shows a compositional bias: acidic residues; the sequence is PEDEEEEEEEEEEEDDEEEEEDEE.

Belongs to the HMGB family. As to quaternary structure, interacts with POU2F2, POU2F1 and POU3F1. Component of the RAG complex composed of core components RAG1 and RAG2, and associated component HMGB1 or HMGB2. Component of the SET complex, composed of at least ANP32A, APEX1, HMGB2, NME1, SET and TREX1. Directly interacts with SET. Interacts with LEF1. Post-translationally, reduction/oxidation of cysteine residues Cys-23, Cys-45 and Cys-106 and a possible intramolecular disulfide bond involving Cys-23 and Cys-45 give rise to different redox forms with specific functional activities in various cellular compartments: 1- fully reduced HMGB2 (HMGB2C23hC45hC106h), 2- disulfide HMGB2 (HMGB2C23-C45C106h) and 3- sulfonyl HMGB2 (HMGB2C23soC45soC106so). As to expression, widely expressed in embryo. In adult mainly expressed in lymphoid organs and testes. Expressed in primary spermatocytes. Expressed in the superficial zone of articular cartilage.

The protein localises to the nucleus. The protein resides in the chromosome. It localises to the cytoplasm. Its subcellular location is the secreted. Functionally, multifunctional protein with various roles in different cellular compartments. May act in a redox sensitive manner. In the nucleus is an abundant chromatin-associated non-histone protein involved in transcription, chromatin remodeling and V(D)J recombination and probably other processes. Binds DNA with a preference to non-canonical DNA structures such as single-stranded DNA. Can bent DNA and enhance DNA flexibility by looping thus providing a mechanism to promote activities on various gene promoters by enhancing transcription factor binding and/or bringing distant regulatory sequences into close proximity. Involved in V(D)J recombination by acting as a cofactor of the RAG complex: acts by stimulating cleavage and RAG protein binding at the 23 bp spacer of conserved recombination signal sequences (RSS). Proposed to be involved in the innate immune response to nucleic acids by acting as a cytoplasmic promiscuous immunogenic DNA/RNA sensor which cooperates with subsequent discriminative sensing by specific pattern recognition receptors. In the extracellular compartment acts as a chemokine. Promotes proliferation and migration of endothelial cells implicating AGER/RAGE. Has antimicrobial activity in gastrointestinal epithelial tissues. Involved in inflammatory response to antigenic stimulus coupled with pro-inflammatory activity. May play a role in germ cell differentiation. Involved in modulation of neurogenesis probably by regulation of neural stem proliferation. Involved in articular cartilage surface maintenance implicating LEF1 and the Wnt/beta-catenin pathway. The protein is High mobility group protein B2 (Hmgb2) of Mus musculus (Mouse).